Consider the following 1024-residue polypeptide: Importin-8 (1024 aa).

Residues 22-102 (AENELNQSYK…RENMVEAIIR (81 aa)) form the Importin N-terminal domain. Residues 896–969 (FGRAQGSEEE…YSTPLDCDNG (74 aa)) are disordered. 2 stretches are compositionally biased toward acidic residues: residues 902-917 (SEEEENEEIPSDEDEV) and 934-952 (DNEDDDDEDDDEYWDDEGL).

It belongs to the importin beta family.

Its subcellular location is the cytoplasm. The protein resides in the nucleus. Involved in nuclear protein import, either by acting as autonomous nuclear transport receptor or as an adapter-like protein in association with the importin-beta subunit KPNB1. Acting autonomously, may serve as receptor for nuclear localization signals (NLS) and promote translocation of import substrates through the nuclear pore complex (NPC) by an energy requiring, Ran-dependent mechanism. At the nucleoplasmic side of the NPC, Ran binds to importin, the importin/substrate complex dissociates and importin is re-exported from the nucleus to the cytoplasm where GTP hydrolysis releases Ran. The directionality of nuclear import is thought to be conferred by an asymmetric distribution of the GTP- and GDP-bound forms of Ran between the cytoplasm and nucleus. In vitro mediates the nuclear import of the signal recognition particle protein SRP19. May also be involved in cytoplasm-to-nucleus shuttling of a broad spectrum of other cargos, including Argonaute-microRNAs complexes, the JUN protein, RELA/NF-kappa-B p65 subunit, the translation initiation factor EIF4E and a set of receptor-activated mothers against decapentaplegic homolog (SMAD) transcription factors that play a critical role downstream of the large family of transforming growth factor beta and bone morphogenetic protein (BMP) cytokines. This is Importin-8 (ipo8) from Danio rerio (Zebrafish).